Here is a 330-residue protein sequence, read N- to C-terminus: Putative [LysW]-L-2-aminoadipate/[LysW]-L-glutamate phosphate reductase (330 aa).

10-13 (SGYI) provides a ligand contact to NADP(+). The active site involves Cys-142. Asn-297 contributes to the NADP(+) binding site.

Belongs to the NAGSA dehydrogenase family. Type 1 subfamily. LysY sub-subfamily.

The protein localises to the cytoplasm. The catalysed reaction is [amino-group carrier protein]-C-terminal-N-(1-carboxy-5-oxopentan-1-yl)-L-glutamine + phosphate + NADP(+) = [amino-group carrier protein]-C-terminal-N-(1-carboxy-5-phosphooxy-5-oxopentan-1-yl)-L-glutamine + NADPH + H(+). The enzyme catalyses [amino-group carrier protein]-C-terminal-gamma-(L-glutamyl-5-semialdehyde)-L-glutamate + phosphate + NADP(+) = [amino-group carrier protein]-C-terminal-gamma-(5-phospho-L-glutamyl)-L-glutamate + NADPH + H(+). Its pathway is amino-acid biosynthesis; L-lysine biosynthesis via AAA pathway; L-lysine from L-alpha-aminoadipate (Thermus route): step 3/5. It participates in amino-acid biosynthesis; L-arginine biosynthesis. Functionally, involved in both the arginine and lysine biosynthetic pathways. This Pyrococcus horikoshii (strain ATCC 700860 / DSM 12428 / JCM 9974 / NBRC 100139 / OT-3) protein is Putative [LysW]-L-2-aminoadipate/[LysW]-L-glutamate phosphate reductase.